A 502-amino-acid polypeptide reads, in one-letter code: Probable cytosol aminopeptidase (502 aa).

Lys265 and Asp270 together coordinate Mn(2+). Residue Lys277 is part of the active site. Positions 288, 347, and 349 each coordinate Mn(2+). Residue Arg351 is part of the active site.

Belongs to the peptidase M17 family. Mn(2+) is required as a cofactor.

It localises to the cytoplasm. It carries out the reaction Release of an N-terminal amino acid, Xaa-|-Yaa-, in which Xaa is preferably Leu, but may be other amino acids including Pro although not Arg or Lys, and Yaa may be Pro. Amino acid amides and methyl esters are also readily hydrolyzed, but rates on arylamides are exceedingly low.. The enzyme catalyses Release of an N-terminal amino acid, preferentially leucine, but not glutamic or aspartic acids.. In terms of biological role, presumably involved in the processing and regular turnover of intracellular proteins. Catalyzes the removal of unsubstituted N-terminal amino acids from various peptides. The polypeptide is Probable cytosol aminopeptidase (Rickettsia bellii (strain RML369-C)).